The chain runs to 571 residues: Double-stranded RNA-binding protein Staufen homolog 2 (571 aa).

The 68-residue stretch at 8-75 folds into the DRBM 1 domain; that stretch reads TPMCLVNELA…ANKALTESTL (68 aa). Phosphoserine is present on residues Pro9 and Val13. Arg18 is modified (phosphothreonine). Ser21 carries the post-translational modification Phosphoserine. 2 disordered regions span residues 71–94 and 178–203; these read TEST…PGSI and ALQN…DDKD. The span at 83-94 shows a compositional bias: polar residues; sequence PKSNVNNNPGSI. Residues 95-181 form the DRBM 2 domain; sequence TPTVELNGLA…AMKALQALQN (87 aa). Ser188 bears the Phosphoserine mark. A compositionally biased stretch (basic and acidic residues) spans 194–203; it reads SGKEMDDDKD. DRBM domains lie at 207–274 and 307–375; these read SEIS…ELKK and NPIS…QLGY. 2 consecutive short sequence motifs (nuclear localization signal) follow at residues 273–317 and 373–412; these read KKLP…QIQQ and LGYK…PKGI. Positions 381 to 571 are required for dendritic transport; it reads LQDQLDKTGE…QDCKKSKSVI (191 aa). The interval 382-413 is disordered; it reads QDQLDKTGENKGWSGPKPGFPEPANNTPKGIL. Phosphoserine occurs at positions 395, 416, 426, 440, 456, and 493. The segment at 546–571 is disordered; that stretch reads LREKADNNQANPGSITQDCKKSKSVI. Polar residues predominate over residues 552 to 562; that stretch reads NNQANPGSITQ.

Identified in a mRNP complex, at least composed of DHX9, DDX3X, ELAVL1, HNRNPU, IGF2BP1, ILF3, PABPC1, PCBP2, PTBP2, STAU1, STAU2, SYNCRIP and YBX1. Interacts with the exportin XPO5. This requires RNA and RAN bound to GTP. Interacts with microtubules. Isoform 2 and isoform 3 may also interact with ribosomes, and this association is independent of translation. Interacts with TRIM71 (via NHL repeats) in an RNA-dependent manner. Expressed in both somata and dendrites of hippocampal neurons.

The protein resides in the nucleus. It localises to the nucleolus. The protein localises to the cytoplasm. Its subcellular location is the endoplasmic reticulum. RNA-binding protein required for the microtubule-dependent transport of neuronal RNA from the cell body to the dendrite. As protein synthesis occurs within the dendrite, the localization of specific mRNAs to dendrites may be a prerequisite for neurite outgrowth and plasticity at sites distant from the cell body. This is Double-stranded RNA-binding protein Staufen homolog 2 (Stau2) from Rattus norvegicus (Rat).